We begin with the raw amino-acid sequence, 514 residues long: Lysine--tRNA ligase (514 aa).

Residues 1 to 13 (MSKPNNQNQQNNQ) are compositionally biased toward low complexity. Positions 1–21 (MSKPNNQNQQNNQEPAPEDAN) are disordered. The Mg(2+) site is built by glutamate 422 and glutamate 429.

It belongs to the class-II aminoacyl-tRNA synthetase family. As to quaternary structure, homodimer. Requires Mg(2+) as cofactor.

It is found in the cytoplasm. It catalyses the reaction tRNA(Lys) + L-lysine + ATP = L-lysyl-tRNA(Lys) + AMP + diphosphate. The chain is Lysine--tRNA ligase from Psychrobacter cryohalolentis (strain ATCC BAA-1226 / DSM 17306 / VKM B-2378 / K5).